We begin with the raw amino-acid sequence, 480 residues long: F-box/LRR-repeat protein 14 (480 aa).

The F-box domain maps to 11-58 (DRQMDELPDHLVWDILSKLHTTDDRNSLSLSCKRFFSLDNEQRYSLRI). LRR repeat units follow at residues 61–86 (GLVP…EIIY), 94–119 (GKQV…TLSF), 120–144 (CTFI…KLNF), 145–170 (APRI…HLIR), 171–196 (CLNV…CIKN), 197–222 (CRAI…QFEV), 229–257 (MKVY…SLGN), 258–283 (CIIA…HLDM), 284–309 (CTGV…SLRV), 322–347 (TLRL…KISF), 355–379 (LFSF…SLDH), 380–404 (VCVF…ELVH), 405–429 (CQEV…KLSK), 430–454 (CLGV…VVED), and 455–480 (CPQV…SWMY).

The protein is F-box/LRR-repeat protein 14 (FBL14) of Arabidopsis thaliana (Mouse-ear cress).